The following is a 293-amino-acid chain: Proteinase T (293 aa).

The propeptide occupies 1-12; sequence EFIEQDAVVTIS. In terms of domain architecture, Peptidase S8 spans 19–293; the sequence is PWGLARISSQ…VLINNGEGSA (275 aa). 2 disulfides stabilise this stretch: Cys46–Cys137 and Cys192–Cys262. Active-site charge relay system residues include Asp51, His83, and Ser238.

This sequence belongs to the peptidase S8 family.

In terms of biological role, serine proteinase. The polypeptide is Proteinase T (PROT) (Parengyodontium album (Tritirachium album)).